Consider the following 405-residue polypeptide: Syndecan-3 (405 aa).

Residues 1–22 (MPAELRRLAVLLLLLSARAALA) form the signal peptide. Residues 23–347 (QPWRNENYER…PQKNILERKE (325 aa)) are Extracellular-facing. The interval 31-59 (ERPVDLEGSGDDDPFGDDELDDIYSGSGS) is disordered. The segment covering 38 to 52 (GSGDDDPFGDDELDD) has biased composition (acidic residues). O-linked (Xyl...) (glycosaminoglycan) serine glycosylation is found at S39, S55, S57, S59, and S66. Disordered stretches follow at residues 134-159 (TTTA…ATTT) and 191-301 (TRAT…ELGN). Low complexity predominate over residues 191–201 (TRATTLETPTT). Residues 202–237 (SIPETSVLTEVTTSRLVPSSTAKPRSLPKPSTSRTA) show a composition bias toward polar residues. Residues S280, S283, and S330 are each glycosylated (O-linked (Xyl...) (glycosaminoglycan) serine). A helical membrane pass occupies residues 348 to 372 (VLIAVIVGGVVGALFAAFLVMLLIY). The Cytoplasmic segment spans residues 373 to 405 (RMKKKDEGSYTLEEPKQANVTYQKPDKQEEFYA).

Belongs to the syndecan proteoglycan family. Post-translationally, O-glycosylated within the Thr/Ser-rich region which could interact with lectin domains on other molecules. As to expression, proximal chondrogenic central core of embryonic limb buds where cartilage differentiation is being initiated.

It localises to the membrane. Cell surface proteoglycan that may bear both heparan sulfate and chondroitin sulfate. The multiple functional domains provide potential sites for mediating the adhesive cell-matrix interactions and cytoskeletal reorganization involved in limb chondrogenesis. Interaction with other matrix ligands as well as phosphorylation and shedding of the ectodomain might be involved in cell shape changes that occur during chondrogenesis. Furthermore, shedding of the ectodomain might break the adhesive interactions that promoted condensation, thus facilitating the deposition of cartilage matrix molecules. The protein is Syndecan-3 (SDC3) of Gallus gallus (Chicken).